The primary structure comprises 295 residues: Protoheme IX farnesyltransferase (295 aa).

9 helical membrane passes run 9–29 (ITKP…FFLA), 36–56 (FGVF…GCVF), 80–100 (LVSL…GVAL), 108–128 (LAAL…SLYL), 135–155 (GTLV…CAVS), 163–183 (LTLL…IAIF), 209–229 (ILLY…GGYA), 230–250 (GLNY…MAWK), and 265–285 (FVFS…DFQV).

This sequence belongs to the UbiA prenyltransferase family. Protoheme IX farnesyltransferase subfamily.

The protein localises to the cell inner membrane. It carries out the reaction heme b + (2E,6E)-farnesyl diphosphate + H2O = Fe(II)-heme o + diphosphate. Its pathway is porphyrin-containing compound metabolism; heme O biosynthesis; heme O from protoheme: step 1/1. Functionally, converts heme B (protoheme IX) to heme O by substitution of the vinyl group on carbon 2 of heme B porphyrin ring with a hydroxyethyl farnesyl side group. The chain is Protoheme IX farnesyltransferase from Pseudomonas syringae pv. tomato (strain ATCC BAA-871 / DC3000).